The primary structure comprises 453 residues: Chromosomal replication initiator protein DnaA (453 aa).

The interval 1 to 78 (MTENEQLFWN…FEIFNAEITA (78 aa)) is domain I, interacts with DnaA modulators. Residues 78-112 (ANYVSNDLHLQETSFSNYQQSSNEVNTLPIRKIDS) form a domain II region. Residues 113 to 331 (NLKEKYTFAN…GALKNISLVA (219 aa)) form a domain III, AAA+ region region. Gly157, Gly159, Lys160, and Thr161 together coordinate ATP. Positions 332–453 (DFKHAKTITV…EIETIKNKIR (122 aa)) are domain IV, binds dsDNA.

It belongs to the DnaA family. As to quaternary structure, oligomerizes as a right-handed, spiral filament on DNA at oriC.

The protein resides in the cytoplasm. Plays an essential role in the initiation and regulation of chromosomal replication. ATP-DnaA binds to the origin of replication (oriC) to initiate formation of the DNA replication initiation complex once per cell cycle. Binds the DnaA box (a 9 base pair repeat at the origin) and separates the double-stranded (ds)DNA. Forms a right-handed helical filament on oriC DNA; dsDNA binds to the exterior of the filament while single-stranded (ss)DNA is stabiized in the filament's interior. The ATP-DnaA-oriC complex binds and stabilizes one strand of the AT-rich DNA unwinding element (DUE), permitting loading of DNA polymerase. After initiation quickly degrades to an ADP-DnaA complex that is not apt for DNA replication. Binds acidic phospholipids. This chain is Chromosomal replication initiator protein DnaA, found in Streptococcus agalactiae serotype Ia (strain ATCC 27591 / A909 / CDC SS700).